The primary structure comprises 152 residues: UPF0260 protein BAB1_1496 (152 aa).

It belongs to the UPF0260 family.

This Brucella abortus (strain 2308) protein is UPF0260 protein BAB1_1496.